A 334-amino-acid polypeptide reads, in one-letter code: Malate dehydrogenase, mitochondrial (334 aa).

The transit peptide at 1–17 (MLSRVAKRAFSSTVANP) directs the protein to the mitochondrion. NAD(+)-binding positions include 24-30 (GAGGGIG) and D50. Positions 99 and 105 each coordinate substrate. NAD(+)-binding positions include N112 and 135 to 137 (ISN). Residues N137 and R171 each coordinate substrate. At S177 the chain carries Phosphoserine. H195 (proton acceptor) is an active-site residue. Position 199 is a phosphothreonine (T199). Residue M245 participates in NAD(+) binding.

The protein belongs to the LDH/MDH superfamily. MDH type 1 family. Homodimer.

It localises to the mitochondrion matrix. The enzyme catalyses (S)-malate + NAD(+) = oxaloacetate + NADH + H(+). This is Malate dehydrogenase, mitochondrial (MDH1) from Saccharomyces cerevisiae (strain ATCC 204508 / S288c) (Baker's yeast).